Here is a 522-residue protein sequence, read N- to C-terminus: MSSITSRVSSRSSHELTEKKSGVTNDFKNSFEVGEVKRLPDAEGTADAVAQELLADDDFTYTAKEARRVLWKIDLVMMPVMCITYMIQYLDKTALSYAALYGMKTDTHIDGHTYSSMTTLFYAGYLVAQYPAAILMQKCRLSYFIFCNVFLWSAMVCLMAACRNGPSLLGLRFLAGIFEASITPAFINITAMWYRREEQPMRTLCWYAFNGIAQIIGSILSYGLGHIHGKVASWRYVFIVIGLMSLGWGVVFVFIPSNPSKARFLSSREKRIALERVRDNRTGLENKQFKWKHAYEAFLDPQVIMITLFTGVCMITNGIGVFSTLIIKGLGYNELHSAVLNMPLGAIEVAAMFISGVLCKVFKNGRLLIGVFMNCLTLAGCLMIWKIPDSNPYGRLVGVWFTMWVPASSALLLSLISSNVAGYTKKTVTSATVFVFYSVGNIVSPQLFKSGQTPEYIEGIQAMIVSLCIIIAIAFVLTGYYIYENKRRDRLLAEDPSLGESIKNEEFMDLTDRQQPKFRYRW.

Residues 1–11 (MSSITSRVSSR) are compositionally biased toward low complexity. The segment at 1–20 (MSSITSRVSSRSSHELTEKK) is disordered. 12 helical membrane passes run 69 to 89 (VLWK…MIQY), 116 to 136 (SMTT…AILM), 141 to 161 (LSYF…LMAA), 173 to 193 (FLAG…TAMW), 204 to 224 (LCWY…SYGL), 236 to 256 (YVFI…VFIP), 303 to 323 (VIMI…GVFS), 338 to 358 (AVLN…SGVL), 367 to 387 (LLIG…IWKI), 396 to 416 (LVGV…LSLI), 428 to 448 (VTSA…PQLF), and 462 to 482 (AMIV…GYYI).

This sequence belongs to the major facilitator superfamily. Allantoate permease family.

The protein resides in the endoplasmic reticulum. It is found in the membrane. This is an uncharacterized protein from Schizosaccharomyces pombe (strain 972 / ATCC 24843) (Fission yeast).